The following is a 1272-amino-acid chain: uncharacterized protein (1272 aa).

3 coiled-coil regions span residues 185–212 (IEFLDEIEKAELKKRRKEGNLTIEEAVN), 246–274 (KNSAEEKEKKLRLSKKKEQLEKIQEYLDA), and 607–640 (ALGKDLEKLIKLVNDHDQEIQKIYKEVEKLNTVI). The interval 1179-1231 (ELPETSQQPVVPTPPATRPSSPIPPESDILTEEEQLEEQPPRQQQATRKTTTT) is disordered. Residues 1189–1203 (VPTPPATRPSSPIPP) show a composition bias toward pro residues. Over residues 1219–1231 (PRQQQATRKTTTT) the composition is skewed to low complexity.

This is an uncharacterized protein from Magallana gigas (Pacific oyster).